Consider the following 250-residue polypeptide: mRNA-decapping protein g5R (250 aa).

In terms of domain architecture, Nudix hydrolase spans 97-239 (QKFRKNWLLP…NLEPMIGPAF (143 aa)). Residues 132-153 (GKPKEDESDLTCAIREFEEETG) carry the Nudix box motif. E138 provides a ligand contact to Mg(2+). Catalysis depends on E147, which acts as the Nucleophile. The Mg(2+) site is built by E151 and D173.

Belongs to the Nudix hydrolase family. DIPP subfamily. In terms of assembly, interacts with host RPL23A. Mg(2+) serves as cofactor. It depends on Mn(2+) as a cofactor.

It is found in the host rough endoplasmic reticulum. It catalyses the reaction diphospho-myo-inositol polyphosphate + H2O = myo-inositol polyphosphate + phosphate.. Decapping enzyme required for the removal of the 5'-end m7GpppN cap tethered to viral and host mRNAs to allow their decay in cells. May therefore accelerate viral and cellular mRNA turnover to eliminate competing host mRNAs and allow stage-specific synthesis of viral proteins. Acceleration of the turnover of cellular transcripts may even promote the shutoff of host protein synthesis. In addition to the mRNA cap, g5R also efficiently hydrolyzes diphosphoinositol polyphosphates. Down-regulation of the level of PP-InsP5 (diphosphoinositol pentakisphosphate) may play a role in viral manipulation of the cellular secretory pathway, a step necessary for the formation of virions. Binds viral and cellular poly(A) mRNAs, thereby decreasing both types of mRNAs. The chain is mRNA-decapping protein g5R from Ornithodoros (relapsing fever ticks).